The chain runs to 249 residues: 15,16-dihydrobiliverdin:ferredoxin oxidoreductase (249 aa).

This sequence belongs to the HY2 family.

It catalyses the reaction 15,16-dihydrobiliverdin + oxidized 2[4Fe-4S]-[ferredoxin] = biliverdin IXalpha + reduced 2[4Fe-4S]-[ferredoxin] + 2 H(+). Its function is as follows. Catalyzes the two-electron reduction of biliverdin IX-alpha at the C15 methine bridge. In Prochlorococcus marinus (strain MIT 9303), this protein is 15,16-dihydrobiliverdin:ferredoxin oxidoreductase.